A 308-amino-acid chain; its full sequence is ATP synthase gamma chain (308 aa).

This sequence belongs to the ATPase gamma chain family. F-type ATPases have 2 components, CF(1) - the catalytic core - and CF(0) - the membrane proton channel. CF(1) has five subunits: alpha(3), beta(3), gamma(1), delta(1), epsilon(1). CF(0) has three main subunits: a, b and c.

It localises to the cell membrane. In terms of biological role, produces ATP from ADP in the presence of a proton gradient across the membrane. The gamma chain is believed to be important in regulating ATPase activity and the flow of protons through the CF(0) complex. This Saccharopolyspora erythraea (strain ATCC 11635 / DSM 40517 / JCM 4748 / NBRC 13426 / NCIMB 8594 / NRRL 2338) protein is ATP synthase gamma chain.